The primary structure comprises 324 residues: Muscleblind-like protein (324 aa).

C3H1-type zinc fingers lie at residues 38–66 (WLQVEVCREFLRGQCARSDQECKFAHPPP) and 72–100 (QGRVTACYDSIKGRCTRENPKCKYLHPPQ).

It belongs to the muscleblind family. In terms of tissue distribution, expressed in neurons around the pharynx.

It is found in the nucleus. Its function is as follows. Binds to RNA with repeat sequences 5'-CUG-3' and 5'-CCUG-3'. This chain is Muscleblind-like protein (mbl-1), found in Caenorhabditis elegans.